The chain runs to 189 residues: Inner membrane-spanning protein YciB (189 aa).

Helical transmembrane passes span 4-24 (FFEFIPLIIFFVVFKTTDIYI), 53-73 (ITFGMVLVFGTLTIVLHDDVF), 76-96 (WKVTVVYALFSLALLVSQFFY), 121-141 (MAWALLFAVLSAVNVYVAFSL), and 149-169 (FKVFGLLAITLAFTLLSGLYI).

This sequence belongs to the YciB family.

Its subcellular location is the cell inner membrane. Its function is as follows. Plays a role in cell envelope biogenesis, maintenance of cell envelope integrity and membrane homeostasis. This Psychromonas ingrahamii (strain DSM 17664 / CCUG 51855 / 37) protein is Inner membrane-spanning protein YciB.